A 431-amino-acid chain; its full sequence is 5-methylthioadenosine/S-adenosylhomocysteine deaminase (431 aa).

Zn(2+) is bound by residues His-60 and His-62. The substrate site is built by Glu-89 and His-182. Residue His-209 coordinates Zn(2+). Residues Glu-212 and Asp-297 each contribute to the substrate site. Asp-297 contributes to the Zn(2+) binding site.

Belongs to the metallo-dependent hydrolases superfamily. MTA/SAH deaminase family. The cofactor is Zn(2+).

It carries out the reaction S-adenosyl-L-homocysteine + H2O + H(+) = S-inosyl-L-homocysteine + NH4(+). It catalyses the reaction S-methyl-5'-thioadenosine + H2O + H(+) = S-methyl-5'-thioinosine + NH4(+). Its function is as follows. Catalyzes the deamination of 5-methylthioadenosine and S-adenosyl-L-homocysteine into 5-methylthioinosine and S-inosyl-L-homocysteine, respectively. Is also able to deaminate adenosine. The protein is 5-methylthioadenosine/S-adenosylhomocysteine deaminase of Natronomonas pharaonis (strain ATCC 35678 / DSM 2160 / CIP 103997 / JCM 8858 / NBRC 14720 / NCIMB 2260 / Gabara) (Halobacterium pharaonis).